Here is a 580-residue protein sequence, read N- to C-terminus: YTH domain-containing family protein 2 (580 aa).

The segment at 1–45 (MSASSLLEQRPKGQGNKVQNGSVHQKDGLNDDDFEPYLSPQARPN) is disordered. S2 is modified (N-acetylserine). Phosphoserine occurs at positions 2, 4, 5, 22, 39, and 196. Positions 2-385 (SASSLLEQRP…QAGSGSTPSE (384 aa)) are localization to mRNA processing bodies (P-bodies). Residues 247–388 (AKQQPKLKTK…SGSTPSEPHP (142 aa)) are disordered. Over residues 291-317 (ALVQNIGQQPTQGSPQPVGQQANNSPP) the composition is skewed to polar residues. A compositionally biased stretch (low complexity) spans 338–350 (AQLSVQQQAAQPT). The residue at position 360 (S360) is a Phosphoserine. Residues 360–372 (SGFGHNGVDGNGV) are compositionally biased toward gly residues. The span at 373 to 384 (GQTQAGSGSTPS) shows a compositional bias: polar residues. Residues 386–580 (PHPVLEKLRS…VKKERQGRGK (195 aa)) form an interaction with m6A-containing mRNAs region. Phosphoserine is present on S395. The region spanning 411-545 (GRVFIIKSYS…EKAKQVLKII (135 aa)) is the YTH domain. Residues 417–419 (KSY), D423, 433–434 (WC), N463, W487, and W492 contribute to the RNA site.

The protein belongs to the YTHDF family. YTHDF2 subfamily. As to quaternary structure, interacts with CNOT1; interaction is direct and promotes recruitment of the CCR4-NOT complex. Interacts with YTHDF3. Interacts with RIDA/HRSP12; interaction leads to recruitment of the ribonuclease P/MRP complex. In terms of processing, ubiquitinated by the SCF(SKP2) complex, leading to its degradation.

The protein localises to the cytoplasm. The protein resides in the cytosol. It is found in the P-body. It localises to the stress granule. Its subcellular location is the nucleus. Functionally, specifically recognizes and binds N6-methyladenosine (m6A)-containing RNAs, and regulates their stability. M6A is a modification present at internal sites of mRNAs and some non-coding RNAs and plays a role in mRNA stability and processing. Acts as a regulator of mRNA stability by promoting degradation of m6A-containing mRNAs via interaction with the CCR4-NOT and ribonuclease P/MRP complexes, depending on the context. The YTHDF paralogs (YTHDF1, YTHDF2 and YTHDF3) share m6A-containing mRNAs targets and act redundantly to mediate mRNA degradation and cellular differentiation. M6A-containing mRNAs containing a binding site for RIDA/HRSP12 (5'-GGUUC-3') are preferentially degraded by endoribonucleolytic cleavage: cooperative binding of RIDA/HRSP12 and YTHDF2 to transcripts leads to recruitment of the ribonuclease P/MRP complex. Other m6A-containing mRNAs undergo deadenylation via direct interaction between YTHDF2 and CNOT1, leading to recruitment of the CCR4-NOT and subsequent deadenylation of m6A-containing mRNAs. Required maternally to regulate oocyte maturation: probably acts by binding to m6A-containing mRNAs, thereby regulating maternal transcript dosage during oocyte maturation, which is essential for the competence of oocytes to sustain early zygotic development. Also required during spermatogenesis: regulates spermagonial adhesion by promoting degradation of m6A-containing transcripts coding for matrix metallopeptidases. Also involved in hematopoietic stem cells specification by binding to m6A-containing mRNAs, leading to promote their degradation. Also acts as a regulator of neural development by promoting m6A-dependent degradation of neural development-related mRNA targets. Inhibits neural specification of induced pluripotent stem cells by binding to methylated neural-specific mRNAs and promoting their degradation, thereby restraining neural differentiation. Regulates circadian regulation of hepatic lipid metabolism: acts by promoting m6A-dependent degradation of PPARA transcripts. Regulates the innate immune response to infection by inhibiting the type I interferon response: acts by binding to m6A-containing IFNB transcripts and promoting their degradation. May also act as a promoter of cap-independent mRNA translation following heat shock stress: upon stress, relocalizes to the nucleus and specifically binds mRNAs with some m6A methylation mark at their 5'-UTR, protecting demethylation of mRNAs by FTO, thereby promoting cap-independent mRNA translation. Regulates mitotic entry by promoting the phase-specific m6A-dependent degradation of WEE1 transcripts. Promotes formation of phase-separated membraneless compartments, such as P-bodies or stress granules, by undergoing liquid-liquid phase separation upon binding to mRNAs containing multiple m6A-modified residues: polymethylated mRNAs act as a multivalent scaffold for the binding of YTHDF proteins, juxtaposing their disordered regions and thereby leading to phase separation. The resulting mRNA-YTHDF complexes then partition into different endogenous phase-separated membraneless compartments, such as P-bodies, stress granules or neuronal RNA granules. May also recognize and bind RNAs modified by C5-methylcytosine (m5C) and act as a regulator of rRNA processing. In Bos taurus (Bovine), this protein is YTH domain-containing family protein 2.